A 279-amino-acid polypeptide reads, in one-letter code: Movement protein (279 aa).

Residues Pro-256 to Ser-266 show a composition bias toward low complexity. The disordered stretch occupies residues Pro-256–Leu-279. Over residues Arg-267–Leu-279 the composition is skewed to polar residues.

This sequence belongs to the cucumovirus movement protein family.

The protein resides in the host cell junction. Its subcellular location is the host plasmodesma. In terms of biological role, transports viral genome to neighboring plant cells directly through plasmosdesmata, without any budding. The movement protein allows efficient cell to cell propagation, by bypassing the host cell wall barrier. Acts by forming a tubular structure at the host plasmodesmata, enlarging it enough to allow free passage of virion capsids. The chain is Movement protein from Cucumis sativus (Cucumber).